Consider the following 115-residue polypeptide: NADH-ubiquinone oxidoreductase chain 3 (115 aa).

Transmembrane regions (helical) follow at residues 3-23 (LMATLLTNTMLTSLMVLIAFW), 55-75 (FFLVAITFLLFDLEIALLLPL), and 86-106 (LTLLMSFMLIILLAIGLAYEW).

Belongs to the complex I subunit 3 family. In terms of assembly, core subunit of respiratory chain NADH dehydrogenase (Complex I) which is composed of 45 different subunits. Interacts with TMEM186. Interacts with TMEM242.

It localises to the mitochondrion inner membrane. The catalysed reaction is a ubiquinone + NADH + 5 H(+)(in) = a ubiquinol + NAD(+) + 4 H(+)(out). In terms of biological role, core subunit of the mitochondrial membrane respiratory chain NADH dehydrogenase (Complex I) which catalyzes electron transfer from NADH through the respiratory chain, using ubiquinone as an electron acceptor. Essential for the catalytic activity of complex I. The polypeptide is NADH-ubiquinone oxidoreductase chain 3 (Mammuthus primigenius (Siberian woolly mammoth)).